The chain runs to 177 residues: Peptide methionine sulfoxide reductase MsrA (177 aa).

Cys10 is a catalytic residue.

Belongs to the MsrA Met sulfoxide reductase family.

It catalyses the reaction L-methionyl-[protein] + [thioredoxin]-disulfide + H2O = L-methionyl-(S)-S-oxide-[protein] + [thioredoxin]-dithiol. It carries out the reaction [thioredoxin]-disulfide + L-methionine + H2O = L-methionine (S)-S-oxide + [thioredoxin]-dithiol. In terms of biological role, has an important function as a repair enzyme for proteins that have been inactivated by oxidation. Catalyzes the reversible oxidation-reduction of methionine sulfoxide in proteins to methionine. In Saccharolobus solfataricus (strain ATCC 35092 / DSM 1617 / JCM 11322 / P2) (Sulfolobus solfataricus), this protein is Peptide methionine sulfoxide reductase MsrA.